The sequence spans 360 residues: Ribosomal RNA large subunit methyltransferase M (360 aa).

Residues Ser192, 225–228 (APGG), Asp244, Asp264, and Asp280 each bind S-adenosyl-L-methionine. Residue Lys309 is the Proton acceptor of the active site.

The protein belongs to the class I-like SAM-binding methyltransferase superfamily. RNA methyltransferase RlmE family. RlmM subfamily. Monomer.

It localises to the cytoplasm. The enzyme catalyses cytidine(2498) in 23S rRNA + S-adenosyl-L-methionine = 2'-O-methylcytidine(2498) in 23S rRNA + S-adenosyl-L-homocysteine + H(+). Its function is as follows. Catalyzes the 2'-O-methylation at nucleotide C2498 in 23S rRNA. This Alkalilimnicola ehrlichii (strain ATCC BAA-1101 / DSM 17681 / MLHE-1) protein is Ribosomal RNA large subunit methyltransferase M.